Here is a 235-residue protein sequence, read N- to C-terminus: Large ribosomal subunit protein uL1 (235 aa).

This sequence belongs to the universal ribosomal protein uL1 family. In terms of assembly, part of the 50S ribosomal subunit.

Binds directly to 23S rRNA. The L1 stalk is quite mobile in the ribosome, and is involved in E site tRNA release. Functionally, protein L1 is also a translational repressor protein, it controls the translation of the L11 operon by binding to its mRNA. The polypeptide is Large ribosomal subunit protein uL1 (Prochlorococcus marinus (strain MIT 9313)).